Reading from the N-terminus, the 381-residue chain is Heterogeneous nuclear rnp K-like protein 2 (381 aa).

The segment at 1–34 (MSQFFEAATPVAIPTNNTNGGSSDAGSAATGGAP) is disordered. A compositionally biased stretch (low complexity) spans 15 to 33 (TNNTNGGSSDAGSAATGGA). KH domains lie at 43–107 (TINH…IGDI), 156–221 (IGYV…LIEI), and 258–326 (NTRI…ESML). The disordered stretch occupies residues 344 to 381 (LEAAEGDATVVTERSDSASFLEEKEEPQENHDNKEEQS). Phosphoserine occurs at positions 358, 360, and 362. Residues 370–381 (PQENHDNKEEQS) are compositionally biased toward basic and acidic residues.

It belongs to the HEK2 family. Binds RNA. Post-translationally, phosphorylated by the plasma membrane-Anchored casein kinase YCK1. Phosphorylation at its C-terminus reduces its RNA-binding capacity.

It is found in the cytoplasm. The protein resides in the P-body. The protein localises to the nucleus. Its subcellular location is the chromosome. It localises to the telomere. Its function is as follows. RNA-binding protein involved in the correct localization of transcripts in the cell. RNA localization is a widespread mechanism for achieving localized protein synthesis. Required for the asymmetric localization to the daughter cell nucleus of the ASH1 transcript, coding for a specific repressor of transcription. Overexpression inhibits translation of the ASH1 transcript. Involved in the stability of transcripts, like the MTL1 mRNA. Involved in structural and functional organization of telomeric chromatin and regulates silencing at the HMR locus. This chain is Heterogeneous nuclear rnp K-like protein 2 (HEK2), found in Saccharomyces cerevisiae (strain YJM789) (Baker's yeast).